Consider the following 587-residue polypeptide: Serine/threonine-protein phosphatase 2A 65 kDa regulatory subunit A gamma isoform (587 aa).

At S2 the chain carries N-acetylserine. HEAT repeat units lie at residues 2-42 (SMVD…ALGE), 44-80 (RTRK…YVGG), 81-119 (VEYA…QMRE), 158-194 (DVLK…AATI), 197-235 (AHLK…LLEP), 236-274 (QDCV…AVGP), 276-313 (PTRT…ILNP), 314-352 (ELAI…VLGK), 353-391 (DATI…VIGI), 393-430 (LLSQ…QLGV), 432-469 (FFDE…EFGP), 470-508 (EWAM…VMGS), 509-547 (EITC…IVDQ), and 549-586 (VVEN…VMMS).

It belongs to the phosphatase 2A regulatory subunit A family. In terms of assembly, PP2A consists of a common heterodimeric core enzyme, composed of a 36 kDa catalytic subunit (subunit C) and a 65 kDa constant regulatory subunit (subunit A), that associates with a variety of regulatory subunits such as subunits B (the R2/B/PR55/B55, R3/B''/PR72/PR130/PR59 and R5/B'/B56 families). Interacts with CHIP. Interacts with SRK2E/OST1. Ubiquitinated. CHIP-mediated ubiquitination enhances phosphatase activity after an abiotic stress such as low temperature or darkness. In terms of tissue distribution, expressed ubiquitously at stable levels. However, higher protein levels in roots and flowers (at protein level).

The protein resides in the cytoplasm. It is found in the cytosol. The protein localises to the nucleus. Functionally, the A subunit of protein phosphatase 2A serves as a scaffolding molecule to coordinate the assembly of the catalytic subunit and a variable regulatory B subunit. Involved during developmental process such as seedling and floral developments. Seems to act as a negative regulator of PP2A catalytic activity. In Arabidopsis thaliana (Mouse-ear cress), this protein is Serine/threonine-protein phosphatase 2A 65 kDa regulatory subunit A gamma isoform (PP2AA3).